The following is a 387-amino-acid chain: Exodeoxyribonuclease 7 large subunit (387 aa).

This sequence belongs to the XseA family. In terms of assembly, heterooligomer composed of large and small subunits.

It localises to the cytoplasm. It carries out the reaction Exonucleolytic cleavage in either 5'- to 3'- or 3'- to 5'-direction to yield nucleoside 5'-phosphates.. In terms of biological role, bidirectionally degrades single-stranded DNA into large acid-insoluble oligonucleotides, which are then degraded further into small acid-soluble oligonucleotides. The protein is Exodeoxyribonuclease 7 large subunit of Campylobacter jejuni subsp. jejuni serotype O:6 (strain 81116 / NCTC 11828).